Reading from the N-terminus, the 201-residue chain is Orotate phosphoribosyltransferase (201 aa).

113-121 (EDIITTGKS) contacts 5-phospho-alpha-D-ribose 1-diphosphate. Thr117 and Arg145 together coordinate orotate.

Belongs to the purine/pyrimidine phosphoribosyltransferase family. PyrE subfamily. In terms of assembly, homodimer. Requires Mg(2+) as cofactor.

It catalyses the reaction orotidine 5'-phosphate + diphosphate = orotate + 5-phospho-alpha-D-ribose 1-diphosphate. It participates in pyrimidine metabolism; UMP biosynthesis via de novo pathway; UMP from orotate: step 1/2. Catalyzes the transfer of a ribosyl phosphate group from 5-phosphoribose 1-diphosphate to orotate, leading to the formation of orotidine monophosphate (OMP). This chain is Orotate phosphoribosyltransferase, found in Helicobacter acinonychis (strain Sheeba).